The following is a 1546-amino-acid chain: Mediator of RNA polymerase II transcription subunit 14 (1546 aa).

2 short sequence motifs (LXXLL motif) span residues 51-55 (LAELL) and 468-472 (LPSLL). Disordered regions lie at residues 692-717 (KSATAAGQQPQQGAASAAGTAPPSGS), 1000-1193 (GRAP…NRPW), and 1512-1546 (NPMMPMQQLQPQVGPQGQVGPGGYPQLGPNPGGPQ). 3 stretches are compositionally biased toward low complexity: residues 693–717 (SATAAGQQPQQGAASAAGTAPPSGS), 1020–1035 (GGPSSVTGVSAGGSSP), and 1061–1075 (PSSSNPHTPASPHPS). Over residues 1093-1102 (PPAPHMPHPS) the composition is skewed to pro residues. Over residues 1125–1149 (GPNTLYMQSHQDSPFTAMSPANNQW) the composition is skewed to polar residues. Over residues 1153–1163 (PSMPRPSPRPG) the composition is skewed to pro residues. Residues 1515 to 1527 (MPMQQLQPQVGPQ) show a composition bias toward low complexity.

The protein belongs to the Mediator complex subunit 14 family. In terms of assembly, component of the Mediator complex.

Its subcellular location is the nucleus. Its function is as follows. Component of the Mediator complex, a coactivator involved in the regulated transcription of nearly all RNA polymerase II-dependent genes. Mediator functions as a bridge to convey information from gene-specific regulatory proteins to the basal RNA polymerase II transcription machinery. Mediator is recruited to promoters by direct interactions with regulatory proteins and serves as a scaffold for the assembly of a functional preinitiation complex with RNA polymerase II and the general transcription factors. The chain is Mediator of RNA polymerase II transcription subunit 14 (MED14) from Drosophila pseudoobscura pseudoobscura (Fruit fly).